The sequence spans 666 residues: DNA mismatch repair protein MutL (666 aa).

The protein belongs to the DNA mismatch repair MutL/HexB family.

In terms of biological role, this protein is involved in the repair of mismatches in DNA. It is required for dam-dependent methyl-directed DNA mismatch repair. May act as a 'molecular matchmaker', a protein that promotes the formation of a stable complex between two or more DNA-binding proteins in an ATP-dependent manner without itself being part of a final effector complex. This Clostridium botulinum (strain Langeland / NCTC 10281 / Type F) protein is DNA mismatch repair protein MutL.